The sequence spans 372 residues: tRNA-specific 2-thiouridylase MnmA (372 aa).

ATP contacts are provided by residues 11-18 (GMSGGVDS) and methionine 37. An interaction with target base in tRNA region spans residues 97 to 99 (NPD). Cysteine 102 serves as the catalytic Nucleophile. A disulfide bridge links cysteine 102 with cysteine 199. Residue glycine 126 coordinates ATP. Residues 149–151 (KDQ) are interaction with tRNA. The Cysteine persulfide intermediate role is filled by cysteine 199. Residues 309 to 310 (RY) are interaction with tRNA.

Belongs to the MnmA/TRMU family.

The protein localises to the cytoplasm. It catalyses the reaction S-sulfanyl-L-cysteinyl-[protein] + uridine(34) in tRNA + AH2 + ATP = 2-thiouridine(34) in tRNA + L-cysteinyl-[protein] + A + AMP + diphosphate + H(+). Its function is as follows. Catalyzes the 2-thiolation of uridine at the wobble position (U34) of tRNA, leading to the formation of s(2)U34. The polypeptide is tRNA-specific 2-thiouridylase MnmA (Staphylococcus aureus (strain bovine RF122 / ET3-1)).